The following is a 360-amino-acid chain: Probable butyrate kinase (360 aa).

Belongs to the acetokinase family.

It localises to the cytoplasm. The catalysed reaction is butanoate + ATP = butanoyl phosphate + ADP. This Enterococcus faecalis (strain ATCC 700802 / V583) protein is Probable butyrate kinase.